Consider the following 210-residue polypeptide: Guanylate kinase (210 aa).

The region spanning 6–186 (GVILVLSSPS…TADRISNILR (181 aa)) is the Guanylate kinase-like domain. 13-20 (SPSGCGKT) contributes to the ATP binding site.

Belongs to the guanylate kinase family.

The protein resides in the cytoplasm. It catalyses the reaction GMP + ATP = GDP + ADP. Functionally, essential for recycling GMP and indirectly, cGMP. In Anaplasma phagocytophilum (strain HZ), this protein is Guanylate kinase.